The sequence spans 227 residues: Cytochrome c oxidase subunit 2 (227 aa).

The Mitochondrial intermembrane segment spans residues 1 to 14; the sequence is MAYPFQLGLQDATS. A helical transmembrane segment spans residues 15–45; the sequence is PIMEELTNFHDHTLMIVFLISSLVLYLISLM. At 46–59 the chain is on the mitochondrial matrix side; sequence LTTKLIHTNTMDAQ. A helical membrane pass occupies residues 60-87; that stretch reads EVETVWTILPAIILIMIALPSLRILYLM. At 88–227 the chain is on the mitochondrial intermembrane side; that stretch reads DEINNPVLTV…LFENWSTSMI (140 aa). Residues H161, C196, E198, C200, H204, and M207 each coordinate Cu cation. E198 contacts Mg(2+).

The protein belongs to the cytochrome c oxidase subunit 2 family. In terms of assembly, component of the cytochrome c oxidase (complex IV, CIV), a multisubunit enzyme composed of 14 subunits. The complex is composed of a catalytic core of 3 subunits MT-CO1, MT-CO2 and MT-CO3, encoded in the mitochondrial DNA, and 11 supernumerary subunits COX4I, COX5A, COX5B, COX6A, COX6B, COX6C, COX7A, COX7B, COX7C, COX8 and NDUFA4, which are encoded in the nuclear genome. The complex exists as a monomer or a dimer and forms supercomplexes (SCs) in the inner mitochondrial membrane with NADH-ubiquinone oxidoreductase (complex I, CI) and ubiquinol-cytochrome c oxidoreductase (cytochrome b-c1 complex, complex III, CIII), resulting in different assemblies (supercomplex SCI(1)III(2)IV(1) and megacomplex MCI(2)III(2)IV(2)). Found in a complex with TMEM177, COA6, COX18, COX20, SCO1 and SCO2. Interacts with TMEM177 in a COX20-dependent manner. Interacts with COX20. Interacts with COX16. Cu cation is required as a cofactor.

It is found in the mitochondrion inner membrane. It catalyses the reaction 4 Fe(II)-[cytochrome c] + O2 + 8 H(+)(in) = 4 Fe(III)-[cytochrome c] + 2 H2O + 4 H(+)(out). In terms of biological role, component of the cytochrome c oxidase, the last enzyme in the mitochondrial electron transport chain which drives oxidative phosphorylation. The respiratory chain contains 3 multisubunit complexes succinate dehydrogenase (complex II, CII), ubiquinol-cytochrome c oxidoreductase (cytochrome b-c1 complex, complex III, CIII) and cytochrome c oxidase (complex IV, CIV), that cooperate to transfer electrons derived from NADH and succinate to molecular oxygen, creating an electrochemical gradient over the inner membrane that drives transmembrane transport and the ATP synthase. Cytochrome c oxidase is the component of the respiratory chain that catalyzes the reduction of oxygen to water. Electrons originating from reduced cytochrome c in the intermembrane space (IMS) are transferred via the dinuclear copper A center (CU(A)) of subunit 2 and heme A of subunit 1 to the active site in subunit 1, a binuclear center (BNC) formed by heme A3 and copper B (CU(B)). The BNC reduces molecular oxygen to 2 water molecules using 4 electrons from cytochrome c in the IMS and 4 protons from the mitochondrial matrix. The chain is Cytochrome c oxidase subunit 2 (MT-CO2) from Gerbillurus vallinus (Brush-tailed hairy-footed gerbil).